A 105-amino-acid chain; its full sequence is Ketoisovalerate oxidoreductase subunit VorD (105 aa).

2 consecutive 4Fe-4S ferredoxin-type domains span residues 44–73 (FKPV…IKPD) and 74–103 (GYVA…MIKE). Residues Cys53, Cys56, Cys59, Cys63, Cys83, Cys86, Cys89, and Cys93 each contribute to the [4Fe-4S] cluster site.

In terms of assembly, heterotetramer of one alpha, one beta, one delta and one gamma chain. [4Fe-4S] cluster is required as a cofactor.

It catalyses the reaction 3-methyl-2-oxobutanoate + 2 oxidized [2Fe-2S]-[ferredoxin] + CoA = 2-methylpropanoyl-CoA + 2 reduced [2Fe-2S]-[ferredoxin] + CO2 + H(+). In Pyrococcus furiosus (strain ATCC 43587 / DSM 3638 / JCM 8422 / Vc1), this protein is Ketoisovalerate oxidoreductase subunit VorD (vorD).